A 335-amino-acid polypeptide reads, in one-letter code: NAC domain-containing protein 87 (335 aa).

The 152-residue stretch at 21 to 172 (LPPGFRFHPT…EWVVCRVFHK (152 aa)) folds into the NAC domain. Residues 119-178 (VGMKKTLVFYRGRAPKGEKTNWVMHEYRLEGKYSYYNLPKSARDEWVVCRVFHKNNPSTT) mediate DNA binding.

The protein resides in the nucleus. Binds to the promoter regions of genes involved in chlorophyll catabolic processes, such as NYC1, SGR1, SGR2 and PAO. The sequence is that of NAC domain-containing protein 87 from Arabidopsis thaliana (Mouse-ear cress).